Here is a 141-residue protein sequence, read N- to C-terminus: Nucleoside diphosphate kinase (141 aa).

The ATP site is built by lysine 11, phenylalanine 59, arginine 87, threonine 93, arginine 104, and asparagine 114. Histidine 117 (pros-phosphohistidine intermediate) is an active-site residue.

The protein belongs to the NDK family. As to quaternary structure, homotetramer. The cofactor is Mg(2+).

It localises to the cytoplasm. The enzyme catalyses a 2'-deoxyribonucleoside 5'-diphosphate + ATP = a 2'-deoxyribonucleoside 5'-triphosphate + ADP. It catalyses the reaction a ribonucleoside 5'-diphosphate + ATP = a ribonucleoside 5'-triphosphate + ADP. In terms of biological role, major role in the synthesis of nucleoside triphosphates other than ATP. The ATP gamma phosphate is transferred to the NDP beta phosphate via a ping-pong mechanism, using a phosphorylated active-site intermediate. This is Nucleoside diphosphate kinase from Burkholderia mallei (strain NCTC 10247).